A 176-amino-acid polypeptide reads, in one-letter code: Ribosome maturation factor RimM (176 aa).

The PRC barrel domain maps to 97-176 (EDEFYWRDLI…QITVDWDPDF (80 aa)).

Belongs to the RimM family. In terms of assembly, binds ribosomal protein uS19.

It localises to the cytoplasm. In terms of biological role, an accessory protein needed during the final step in the assembly of 30S ribosomal subunit, possibly for assembly of the head region. Essential for efficient processing of 16S rRNA. May be needed both before and after RbfA during the maturation of 16S rRNA. It has affinity for free ribosomal 30S subunits but not for 70S ribosomes. The chain is Ribosome maturation factor RimM from Shewanella sediminis (strain HAW-EB3).